The primary structure comprises 445 residues: 6-phosphogluconate dehydrogenase, decarboxylating (445 aa).

Residues 1-4 (AVMG), 22-24 (NRS), 63-65 (VKA), and asparagine 91 each bind NADP(+). Residues asparagine 91 and 117-119 (SGG) contribute to the substrate site. The active-site Proton acceptor is lysine 172. 175–176 (HN) lines the substrate pocket. Glutamate 179 serves as the catalytic Proton donor. Positions 180, 249, 276, 434, and 440 each coordinate substrate.

The protein belongs to the 6-phosphogluconate dehydrogenase family. As to quaternary structure, homodimer.

The catalysed reaction is 6-phospho-D-gluconate + NADP(+) = D-ribulose 5-phosphate + CO2 + NADPH. The protein operates within carbohydrate degradation; pentose phosphate pathway; D-ribulose 5-phosphate from D-glucose 6-phosphate (oxidative stage): step 3/3. In terms of biological role, catalyzes the oxidative decarboxylation of 6-phosphogluconate to ribulose 5-phosphate and CO(2), with concomitant reduction of NADP to NADPH. The polypeptide is 6-phosphogluconate dehydrogenase, decarboxylating (gnd) (Raoultella planticola (Klebsiella planticola)).